Here is a 304-residue protein sequence, read N- to C-terminus: MARTENDTWDLASSVGATATMVAAARALATNADEPAIDDPFAAPLVRAVGVDFFTKLVDDNFDLTALDPEAAEGLTRFANGMAARTRFFDDFFLDAARAGVRQFVILASGLDARAYRLPWPAGSVVFEIDQPDVIEFKTKALADLGALPTTDRRAVAVDLRFDWPAALTEAGFDPAEPTAWIAEGLLGYLPPEAQDRLLDQIAELSAPGSRVAVEEIPAIEEEDHEEIAARMKDFSDRWRAHGFDLDFTELVFLGDRADVSSYLQGHGWKTTSMTSDELLVHNGLPRVDDDAQIGSVVYVTATR.

S-adenosyl-L-methionine contacts are provided by residues Asp130 and 159–160 (DL).

It belongs to the UPF0677 family.

Exhibits S-adenosyl-L-methionine-dependent methyltransferase activity. The sequence is that of Putative S-adenosyl-L-methionine-dependent methyltransferase MSMEG_1482/MSMEI_1446 from Mycolicibacterium smegmatis (strain ATCC 700084 / mc(2)155) (Mycobacterium smegmatis).